We begin with the raw amino-acid sequence, 60 residues long: Large ribosomal subunit protein bL32 (60 aa).

Residues 1–60 (MAVQQNKKSRSARDMRRSHDALESNALSVEKSTGEVHLRHHVSPDGFYRGRKVVDKGSDE) are disordered. Residues 11-22 (SARDMRRSHDAL) are compositionally biased toward basic and acidic residues.

The protein belongs to the bacterial ribosomal protein bL32 family.

The protein is Large ribosomal subunit protein bL32 of Pseudomonas aeruginosa (strain LESB58).